Here is a 275-residue protein sequence, read N- to C-terminus: 3',5'-cyclic adenosine monophosphate phosphodiesterase CpdA (275 aa).

Residues aspartate 22, histidine 24, aspartate 64, asparagine 94, histidine 164, histidine 203, and histidine 205 each contribute to the Fe cation site. AMP-binding positions include histidine 24, aspartate 64, and 94–95 (NH). Residue histidine 205 participates in AMP binding.

The protein belongs to the cyclic nucleotide phosphodiesterase class-III family. Fe(2+) is required as a cofactor.

It catalyses the reaction 3',5'-cyclic AMP + H2O = AMP + H(+). Functionally, hydrolyzes cAMP to 5'-AMP. Plays an important regulatory role in modulating the intracellular concentration of cAMP, thereby influencing cAMP-dependent processes. In Escherichia coli O157:H7, this protein is 3',5'-cyclic adenosine monophosphate phosphodiesterase CpdA.